The primary structure comprises 219 residues: MMNSRISIIIALSCIMITSIRAYDPDALQDLCVADKSHGTKLNGFPCKETLNITESDFFFAGISKPAVINSTMGSAVTGANVEKIPGLNTLSVSLARIDYAPGGLNPPHTHPRATEVVYVLEGELEVGFITTANKLFTKTIKIGEVFVFPRGLVHFQKNNGKSPASVLSAFNSQLPGTASVAATLFAAEPALPEDVLTKTFQVGSKMVDKIKERLATKK.

The signal sequence occupies residues 1–22 (MMNSRISIIIALSCIMITSIRA). A disulfide bond links cysteine 32 and cysteine 47. 2 N-linked (GlcNAc...) asparagine glycosylation sites follow: asparagine 52 and asparagine 70. Residues 59 to 209 (FFAGISKPAV…TFQVGSKMVD (151 aa)) enclose the Cupin type-1 domain. Residues histidine 109, histidine 111, glutamate 116, and histidine 155 each coordinate Mn(2+).

This sequence belongs to the germin family. Oligomer (believed to be a pentamer but probably hexamer).

It localises to the secreted. It is found in the extracellular space. Its subcellular location is the apoplast. Functionally, may play a role in plant defense. Probably has no oxalate oxidase activity even if the active site is conserved. The chain is Germin-like protein subfamily 2 member 2 from Arabidopsis thaliana (Mouse-ear cress).